A 143-amino-acid polypeptide reads, in one-letter code: Hemoglobin subunit alpha-A (143 aa).

One can recognise a Globin domain in the interval 2-143 (SLSGKDKSVV…LALALAERYR (142 aa)). His60 lines the O2 pocket. Residue His89 coordinates heme b.

Belongs to the globin family. Heterotetramer of two alpha chains and two beta chains. Red blood cells.

Functionally, involved in oxygen transport from gills to the various peripheral tissues. In Seriola quinqueradiata (Five-ray yellowtail), this protein is Hemoglobin subunit alpha-A (hbaa).